We begin with the raw amino-acid sequence, 686 residues long: Forkhead box protein P1 (686 aa).

Polar residues-rich tracts occupy residues Met1–Gly19 and Ile279–Val292. Disordered stretches follow at residues Met1 to Gly23 and Ile279 to Ser306. Positions Pro295–Ser306 are enriched in basic and acidic residues. The segment at Gly315–His340 adopts a C2H2-type zinc-finger fold. The leucine-zipper stretch occupies residues Val357–Leu378. The tract at residues Pro391–Val395 is CTBP1-binding. The segment covering Thr403–Leu412 has biased composition (polar residues). Positions Thr403–Asn440 are disordered. Residues Pro413–Thr427 show a composition bias toward low complexity. Residues Gln428–His439 are compositionally biased toward polar residues. The fork-head DNA-binding region spans Arg474–Leu564. Residues Met619–Glu686 are disordered. The span at His621–Gly632 shows a compositional bias: polar residues. A compositionally biased stretch (acidic residues) spans Tyr676–Glu686.

It is found in the nucleus. In terms of biological role, transcriptional repressor. In Gallus gallus (Chicken), this protein is Forkhead box protein P1 (FOXP1).